Reading from the N-terminus, the 63-residue chain is Large ribosomal subunit protein uL29 (63 aa).

Belongs to the universal ribosomal protein uL29 family.

The chain is Large ribosomal subunit protein uL29 from Azotobacter vinelandii (strain DJ / ATCC BAA-1303).